We begin with the raw amino-acid sequence, 175 residues long: R-phycoerythrin subunit beta (175 aa).

Residue C82 participates in (2R,3E)-phycoerythrobilin binding.

It belongs to the phycobiliprotein family. As to quaternary structure, homodimer. Contains one covalently linked phycoerythrobilin chromophore.

Green-light absorbing phycoerythrin of unknown function. This is R-phycoerythrin subunit beta (cpeB) from Prochlorococcus marinus subsp. pastoris (strain CCMP1986 / NIES-2087 / MED4).